We begin with the raw amino-acid sequence, 452 residues long: Probable alpha-galactosidase B (452 aa).

The signal sequence occupies residues 1 to 24 (MLHRATTTAAAAAAAALLLCPVQA). Cysteine 47 and cysteine 79 are disulfide-bonded. N-linked (GlcNAc...) asparagine glycosylation is found at asparagine 87 and asparagine 138. An intrachain disulfide couples cysteine 129 to cysteine 159. Aspartate 157 serves as the catalytic Nucleophile. Asparagine 184 carries an N-linked (GlcNAc...) asparagine glycan. 231–235 (DWGQA) serves as a coordination point for substrate. Aspartate 253 (proton donor) is an active-site residue. 4 N-linked (GlcNAc...) asparagine glycosylation sites follow: asparagine 292, asparagine 391, asparagine 409, and asparagine 410.

This sequence belongs to the glycosyl hydrolase 27 family.

The protein resides in the secreted. It carries out the reaction Hydrolysis of terminal, non-reducing alpha-D-galactose residues in alpha-D-galactosides, including galactose oligosaccharides, galactomannans and galactolipids.. Its function is as follows. Hydrolyzes a variety of simple alpha-D-galactoside as well as more complex molecules such as oligosaccharides and polysaccharides. In Talaromyces emersonii (Thermophilic fungus), this protein is Probable alpha-galactosidase B.